The chain runs to 348 residues: Dihydroorotase (348 aa).

Zn(2+) is bound by residues H17 and H19. Substrate contacts are provided by residues 19-21 (HLR) and N45. Zn(2+)-binding residues include K103, H140, and H178. An N6-carboxylysine modification is found at K103. A substrate-binding site is contributed by H140. A substrate-binding site is contributed by L223. A Zn(2+)-binding site is contributed by D251. D251 is a catalytic residue. The substrate site is built by H255 and A267.

It belongs to the metallo-dependent hydrolases superfamily. DHOase family. Class II DHOase subfamily. As to quaternary structure, homodimer. Zn(2+) is required as a cofactor.

It carries out the reaction (S)-dihydroorotate + H2O = N-carbamoyl-L-aspartate + H(+). Its pathway is pyrimidine metabolism; UMP biosynthesis via de novo pathway; (S)-dihydroorotate from bicarbonate: step 3/3. In terms of biological role, catalyzes the reversible cyclization of carbamoyl aspartate to dihydroorotate. In Shigella flexneri serotype 5b (strain 8401), this protein is Dihydroorotase.